A 136-amino-acid polypeptide reads, in one-letter code: Translation initiation factor 5A (136 aa).

At Lys-37 the chain carries Hypusine.

The protein belongs to the eIF-5A family.

The protein resides in the cytoplasm. In terms of biological role, functions by promoting the formation of the first peptide bond. This is Translation initiation factor 5A from Thermococcus kodakarensis (strain ATCC BAA-918 / JCM 12380 / KOD1) (Pyrococcus kodakaraensis (strain KOD1)).